Here is a 166-residue protein sequence, read N- to C-terminus: Probable protein tyrosine phosphatase type IVA A (166 aa).

A Tyrosine-protein phosphatase domain is found at 10-164 (NPASLVESST…YKSKKKSSCR (155 aa)). A disulfide bridge links cysteine 52 with cysteine 107. Catalysis depends on aspartate 75, which acts as the Proton donor. Cysteine 107 functions as the Phosphocysteine intermediate in the catalytic mechanism. 108–113 (VAGLGR) contacts phosphate. Arginine 113 lines the substrate pocket. Cysteine 163 is modified (cysteine methyl ester). A lipid anchor (S-farnesyl cysteine) is attached at cysteine 163. Residues 164 to 166 (RIM) constitute a propeptide, removed in mature form.

The protein belongs to the protein-tyrosine phosphatase family.

It localises to the membrane. The enzyme catalyses O-phospho-L-tyrosyl-[protein] + H2O = L-tyrosyl-[protein] + phosphate. This is Probable protein tyrosine phosphatase type IVA A from Dictyostelium discoideum (Social amoeba).